The following is a 221-amino-acid chain: Cutinase 3 (221 aa).

A signal peptide spans Met1–Ala17. Disulfide bonds link Cys44-Cys122 and Cys70-Cys84. The active-site Nucleophile is Ser133. A disulfide bridge connects residues Cys184 and Cys191. Asp188 is a catalytic residue. Catalysis depends on His201, which acts as the Proton donor/acceptor.

It belongs to the cutinase family.

Its subcellular location is the secreted. It catalyses the reaction cutin + H2O = cutin monomers.. In terms of biological role, catalyzes the hydrolysis of complex carboxylic polyesters found in the cell wall of plants. Degrades cutin, a macromolecule that forms the structure of the plant cuticle. Also degrades suberin, a specialized macromolecule found in the cell wall of various plant tissues. In Emericella nidulans (strain FGSC A4 / ATCC 38163 / CBS 112.46 / NRRL 194 / M139) (Aspergillus nidulans), this protein is Cutinase 3.